A 351-amino-acid chain; its full sequence is Putative aminodehydroquinate synthase (351 aa).

Residues 65 to 68, 97 to 101, 121 to 122, Lys134, Lys143, and 161 to 164 each bind NAD(+); these read EPTK, GTTTD, TS, and YLTT. Zn(2+) contacts are provided by Glu176, His225, and His241.

It belongs to the sugar phosphate cyclases superfamily. aDHQS family. NAD(+) is required as a cofactor. It depends on Co(2+) as a cofactor. Requires Zn(2+) as cofactor.

May catalyze the conversion of 3,4-dideoxy-4-amino-D-arabino-heptulosonate 7-phosphate (aDAHP) to 5-deoxy-5-amino-3-dehydroquinate (aDHQ). Probably involved in the formation of 3-amino-5-hydroxybenzoic acid (AHBA), the precursor of rifamycin and related ansamycins. The polypeptide is Putative aminodehydroquinate synthase (Amycolatopsis mediterranei (strain S699) (Nocardia mediterranei)).